The sequence spans 585 residues: Suppressor of mec-8 and unc-52 protein homolog 2 (585 aa).

The span at 1 to 14 (MKPSKSHHKEKTAR) shows a compositional bias: basic residues. Disordered regions lie at residues 1–52 (MKPS…SSFH) and 219–324 (KKKK…PRDK). The segment covering 15 to 39 (RREEKLEESDNPKYRDRAKERRENQ) has biased composition (basic and acidic residues). R-[ED] repeat units follow at residues 16-17 (RE), 29-30 (RD), 36-37 (RE), and 258-259 (RE). Basic and acidic residues predominate over residues 276-288 (LSTKQEEPPVART). 6 R-[ED] repeats span residues 322–323 (RD), 436–437 (RD), 445–446 (RE), 450–451 (RE), 540–541 (RD), and 542–543 (RD). Residues 523-585 (FQFGVKMQDG…EAQTPKRSKH (63 aa)) form a disordered region. Positions 530–548 (QDGRKTRKQNRDRDQKLNN) are enriched in basic and acidic residues. The residue at position 579 (Thr-579) is a Phosphothreonine.

The protein belongs to the RED family. In terms of assembly, component of the spliceosome. Interacts with SMU1. In terms of tissue distribution, highly expressed in seedlings at 7 days after germination, young flowers before anthesis and developing siliques. Expressed at lower levels in roots, expanding leaves, open flowers, dry seeds and inflorescences. Not detected in senescing leaves.

Its subcellular location is the nucleus. Functionally, auxiliary spliceosomal protein involved in splicing of specific pre-mRNAs that affect multiple aspects of development. This is Suppressor of mec-8 and unc-52 protein homolog 2 (SMU2) from Arabidopsis thaliana (Mouse-ear cress).